We begin with the raw amino-acid sequence, 318 residues long: MISQIISSFLTFVMILIAVAFLTLIERKVLGYMQLRKGPNIVGPFGLLQPFADGIKLFIKEPLQPSYASIFLFILAPALAISLALILWISLPLPLALSDMNLGLMFILAISSLSVYSLLTSGWASNSKYALMGALRAVAQTISYEVTLGLMIVALTILSGGFDLKLFIDLQNKIWLLFPMWPIFLMWFISTLAETNRSPFDLTEGESELVSGFNVEFSGGLFALFFLAEYANILFMNSLTVVLFMGSSNLSSLYFSASMTMKTMFLIFLFLWVRASYPRFRYDQLMHLMWKNFLPITLSLLIFQFSMSLFFGVSPSAI.

A run of 8 helical transmembrane segments spans residues 5–25, 69–89, 102–122, 148–168, 174–194, 215–235, 253–273, and 293–313; these read IISS…LTLI, SIFL…ILWI, LGLM…LTSG, LGLM…KLFI, IWLL…TLAE, VEFS…NILF, LYFS…FLWV, and FLPI…FFGV.

The protein belongs to the complex I subunit 1 family.

It localises to the mitochondrion inner membrane. The enzyme catalyses a ubiquinone + NADH + 5 H(+)(in) = a ubiquinol + NAD(+) + 4 H(+)(out). In terms of biological role, core subunit of the mitochondrial membrane respiratory chain NADH dehydrogenase (Complex I) that is believed to belong to the minimal assembly required for catalysis. Complex I functions in the transfer of electrons from NADH to the respiratory chain. The immediate electron acceptor for the enzyme is believed to be ubiquinone. The chain is NADH-ubiquinone oxidoreductase chain 1 (MT-ND1) from Myxine glutinosa (Atlantic hagfish).